The following is a 228-amino-acid chain: MKKKAVILLSGGPDSTTVLEIVSKTDYEIYALSFNYHRRNSLEVQKIQGLIKDYNVKQHRVINIDLQSFIGSALTDDNIDVPKFKNTDQLPSDIPVTYVPARNTIFLSYALGVVEVIGARDIFIGVHTNDYTNYPDCRPEYIKSFEAMANLATRVGVNGEKITIHAPLINMTKEQIIKKGLELGVDYSKTISCYDPTEDGLSCGQCLSCIARLDAFKKNNVQDPIKYV.

ATP is bound at residue 9–19 (LSGGPDSTTVL). 4 residues coordinate Zn(2+): cysteine 193, cysteine 203, cysteine 206, and cysteine 209.

The protein belongs to the QueC family. Zn(2+) is required as a cofactor.

It catalyses the reaction 7-carboxy-7-deazaguanine + NH4(+) + ATP = 7-cyano-7-deazaguanine + ADP + phosphate + H2O + H(+). It functions in the pathway purine metabolism; 7-cyano-7-deazaguanine biosynthesis. Its function is as follows. Catalyzes the ATP-dependent conversion of 7-carboxy-7-deazaguanine (CDG) to 7-cyano-7-deazaguanine (preQ(0)). In Rickettsia peacockii (strain Rustic), this protein is 7-cyano-7-deazaguanine synthase.